A 110-amino-acid chain; its full sequence is Proline-rich protein 15-like protein A (110 aa).

Disordered stretches follow at residues 29 to 51 (IAGDHSSNGGEAPGTTDAATDSQ) and 65 to 110 (TKGR…KSGK). The span at 65–85 (TKGRHVKVSHSGRFKEKKRIR) shows a compositional bias: basic residues. Polar residues predominate over residues 100 to 110 (TTANENNKSGK).

The protein belongs to the PRR15 family.

This chain is Proline-rich protein 15-like protein A (prr15la), found in Danio rerio (Zebrafish).